Reading from the N-terminus, the 129-residue chain is Phosphoribosyl-AMP cyclohydrolase (129 aa).

Asp-79 provides a ligand contact to Mg(2+). Cys-80 serves as a coordination point for Zn(2+). Mg(2+)-binding residues include Asp-81 and Asp-83. 2 residues coordinate Zn(2+): Cys-96 and Cys-103.

Belongs to the PRA-CH family. In terms of assembly, homodimer. The cofactor is Mg(2+). Zn(2+) serves as cofactor.

Its subcellular location is the cytoplasm. It catalyses the reaction 1-(5-phospho-beta-D-ribosyl)-5'-AMP + H2O = 1-(5-phospho-beta-D-ribosyl)-5-[(5-phospho-beta-D-ribosylamino)methylideneamino]imidazole-4-carboxamide. Its pathway is amino-acid biosynthesis; L-histidine biosynthesis; L-histidine from 5-phospho-alpha-D-ribose 1-diphosphate: step 3/9. In terms of biological role, catalyzes the hydrolysis of the adenine ring of phosphoribosyl-AMP. The polypeptide is Phosphoribosyl-AMP cyclohydrolase (Magnetococcus marinus (strain ATCC BAA-1437 / JCM 17883 / MC-1)).